The sequence spans 185 residues: Ribosome-recycling factor (185 aa).

Belongs to the RRF family.

It is found in the cytoplasm. Responsible for the release of ribosomes from messenger RNA at the termination of protein biosynthesis. May increase the efficiency of translation by recycling ribosomes from one round of translation to another. This is Ribosome-recycling factor from Corynebacterium kroppenstedtii (strain DSM 44385 / JCM 11950 / CIP 105744 / CCUG 35717).